Here is a 301-residue protein sequence, read N- to C-terminus: Pantothenate synthetase (301 aa).

An ATP-binding site is contributed by 30-37 (MGNLHEGH). The active-site Proton donor is His-37. (R)-pantoate is bound at residue Gln-61. Gln-61 provides a ligand contact to beta-alanine. 149–152 (GEKD) is a binding site for ATP. Gln-155 contributes to the (R)-pantoate binding site. Residues Val-178 and 186 to 189 (MSSR) each bind ATP.

It belongs to the pantothenate synthetase family. In terms of assembly, homodimer.

It is found in the cytoplasm. It catalyses the reaction (R)-pantoate + beta-alanine + ATP = (R)-pantothenate + AMP + diphosphate + H(+). It functions in the pathway cofactor biosynthesis; (R)-pantothenate biosynthesis; (R)-pantothenate from (R)-pantoate and beta-alanine: step 1/1. Its function is as follows. Catalyzes the condensation of pantoate with beta-alanine in an ATP-dependent reaction via a pantoyl-adenylate intermediate. The polypeptide is Pantothenate synthetase (Vibrio parahaemolyticus serotype O3:K6 (strain RIMD 2210633)).